Reading from the N-terminus, the 279-residue chain is NAD kinase (279 aa).

Aspartate 61 acts as the Proton acceptor in catalysis. NAD(+)-binding positions include 61–62, 138–139, lysine 149, lysine 166, aspartate 168, and 179–184; these read DG, ND, and TGYSFS.

Belongs to the NAD kinase family. A divalent metal cation is required as a cofactor.

It is found in the cytoplasm. The catalysed reaction is NAD(+) + ATP = ADP + NADP(+) + H(+). In terms of biological role, involved in the regulation of the intracellular balance of NAD and NADP, and is a key enzyme in the biosynthesis of NADP. Catalyzes specifically the phosphorylation on 2'-hydroxyl of the adenosine moiety of NAD to yield NADP. In Borreliella burgdorferi (strain ATCC 35210 / DSM 4680 / CIP 102532 / B31) (Borrelia burgdorferi), this protein is NAD kinase.